Reading from the N-terminus, the 427-residue chain is Glutamate-1-semialdehyde 2,1-aminomutase (427 aa).

Lys-265 carries the post-translational modification N6-(pyridoxal phosphate)lysine.

This sequence belongs to the class-III pyridoxal-phosphate-dependent aminotransferase family. HemL subfamily. As to quaternary structure, homodimer. Pyridoxal 5'-phosphate is required as a cofactor.

The protein resides in the cytoplasm. It catalyses the reaction (S)-4-amino-5-oxopentanoate = 5-aminolevulinate. It participates in porphyrin-containing compound metabolism; protoporphyrin-IX biosynthesis; 5-aminolevulinate from L-glutamyl-tRNA(Glu): step 2/2. This is Glutamate-1-semialdehyde 2,1-aminomutase from Pseudomonas aeruginosa (strain LESB58).